A 432-amino-acid polypeptide reads, in one-letter code: Trigger factor (432 aa).

A PPIase FKBP-type domain is found at 161 to 246; the sequence is DDRVTIDFVG…LKKIENMVLP (86 aa).

Belongs to the FKBP-type PPIase family. Tig subfamily.

Its subcellular location is the cytoplasm. It catalyses the reaction [protein]-peptidylproline (omega=180) = [protein]-peptidylproline (omega=0). In terms of biological role, involved in protein export. Acts as a chaperone by maintaining the newly synthesized protein in an open conformation. Functions as a peptidyl-prolyl cis-trans isomerase. The sequence is that of Trigger factor from Haemophilus influenzae (strain PittEE).